The chain runs to 277 residues: Caspase-3 (277 aa).

Met1 carries the post-translational modification N-acetylmethionine. 2 propeptides span residues 1–9 (MDNNETSVD) and 10–28 (SKSI…KSMD). Lys11 carries the post-translational modification N6-acetyllysine. Ser26 is modified (phosphoserine). Catalysis depends on residues His121 and Cys163. Cys163 is modified (S-nitrosocysteine; in inhibited form).

The protein belongs to the peptidase C14A family. As to quaternary structure, heterotetramer that consists of two anti-parallel arranged heterodimers, each one formed by a 17 kDa (p17) and a 12 kDa (p12) subunit. Interacts with BIRC6/bruce. In terms of processing, cleavage by granzyme B, caspase-6, caspase-8 and caspase-10 generates the two active subunits. Additional processing of the propeptides is likely due to the autocatalytic activity of the activated protease. Active heterodimers between the small subunit of caspase-7 protease and the large subunit of caspase-3 also occur and vice versa. Post-translationally, S-nitrosylated on its catalytic site cysteine in unstimulated cell lines and denitrosylated upon activation of the Fas apoptotic pathway, associated with an increase in intracellular caspase activity. Fas therefore activates caspase-3 not only by inducing the cleavage of the caspase zymogen to its active subunits, but also by stimulating the denitrosylation of its active site thiol. Ubiquitinated by BIRC6; this activity is inhibited by DIABLO/SMAC. As to expression, expressed in heart, brain, liver, and muscle but not in kidney or testis.

Its subcellular location is the cytoplasm. It catalyses the reaction Strict requirement for an Asp residue at positions P1 and P4. It has a preferred cleavage sequence of Asp-Xaa-Xaa-Asp-|- with a hydrophobic amino-acid residue at P2 and a hydrophilic amino-acid residue at P3, although Val or Ala are also accepted at this position.. Its activity is regulated as follows. Inhibited by BIRC6; following inhibition of BIRC6-caspase binding by DIABLO/SMAC, BIRC6 is subjected to caspase cleavage, leading to an increase in active caspases. Involved in the activation cascade of caspases responsible for apoptosis execution. At the onset of apoptosis, it proteolytically cleaves poly(ADP-ribose) polymerase PARP1 at a '216-Asp-|-Gly-217' bond. Cleaves and activates sterol regulatory element binding proteins (SREBPs) between the basic helix-loop-helix leucine zipper domain and the membrane attachment domain. Cleaves and activates caspase-6, -7 and -9 (CASP6, CASP7 and CASP9, respectively). Cleaves and inactivates interleukin-18 (IL18). Triggers cell adhesion in sympathetic neurons through RET cleavage. Cleaves IL-1 beta between an Asp and an Ala, releasing the mature cytokine which is involved in a variety of inflammatory processes. Cleaves and inhibits serine/threonine-protein kinase AKT1 in response to oxidative stress. Acts as an inhibitor of type I interferon production during virus-induced apoptosis by mediating cleavage of antiviral proteins CGAS, IRF3 and MAVS, thereby preventing cytokine overproduction. Also involved in pyroptosis by mediating cleavage and activation of gasdermin-E (GSDME). Cleaves XRCC4 and phospholipid scramblase proteins XKR4, XKR8 and XKR9, leading to promote phosphatidylserine exposure on apoptotic cell surface. Cleaves BIRC6 following inhibition of BIRC6-caspase binding by DIABLO/SMAC. The protein is Caspase-3 (Casp3) of Rattus norvegicus (Rat).